We begin with the raw amino-acid sequence, 121 residues long: Small ribosomal subunit protein uS13 (121 aa).

Residues 91-121 (HRRGLPVRGQNSKNNARTRKGPRRTVANKKK) form a disordered region. The span at 106-121 (ARTRKGPRRTVANKKK) shows a compositional bias: basic residues.

It belongs to the universal ribosomal protein uS13 family. In terms of assembly, part of the 30S ribosomal subunit. Forms a loose heterodimer with protein S19. Forms two bridges to the 50S subunit in the 70S ribosome.

Its function is as follows. Located at the top of the head of the 30S subunit, it contacts several helices of the 16S rRNA. In the 70S ribosome it contacts the 23S rRNA (bridge B1a) and protein L5 of the 50S subunit (bridge B1b), connecting the 2 subunits; these bridges are implicated in subunit movement. Contacts the tRNAs in the A and P-sites. In Bacillus cereus (strain AH187), this protein is Small ribosomal subunit protein uS13.